The sequence spans 255 residues: Testis-specific H1 histone (255 aa).

The disordered stretch occupies residues 1–54; the sequence is MEQALTGEAQSRWPRRGGSGAMAEAPGPSGESRGHSATQLPAEKTVGGPSRGCS. Ser56 is modified (phosphoserine). The segment covering 124–134 has biased composition (basic residues); it reads KVPKPRRKPGR. Residues 124 to 255 are disordered; it reads KVPKPRRKPG…PKKPAQRTIQ (132 aa). Residues 142-152 show a composition bias toward low complexity; sequence RAPWRTPAAPR. Composition is skewed to basic residues over residues 153–166 and 174–194; these read SSRRRRQPLRKAAR and RNARAKAKANARARRTRRARP. 2 stretches are compositionally biased toward basic and acidic residues: residues 195 to 230 and 238 to 248; these read RAKEPPCARAKEEAGATAADEGRGQAVKEDTTPRSG and KPREEKQEPKK.

The protein belongs to the histone H1/H5 family. Testis-specific.

It localises to the nucleus. Its subcellular location is the chromosome. Functionally, essential for normal spermatogenesis and male fertility. Required for proper cell restructuring and DNA condensation during the elongation phase of spermiogenesis. Involved in the histone-protamine transition of sperm chromatin and the subsequent production of functional sperm. Binds both double-stranded and single-stranded DNA, ATP and protamine-1. This Homo sapiens (Human) protein is Testis-specific H1 histone.